The chain runs to 439 residues: Chromosomal replication initiator protein DnaA (439 aa).

A domain I, interacts with DnaA modulators region spans residues 1-72 (MEQFSAFKLL…SKLYDDIRAV (72 aa)). The domain II stretch occupies residues 72–99 (VRFVNEQDFFINLAKLEEDNRETLYQSS). Residues 100–322 (GLSKNFTFKN…GIATKLLFYV (223 aa)) form a domain III, AAA+ region region. Positions 144, 146, 147, and 148 each coordinate ATP. A domain IV, binds dsDNA region spans residues 323–439 (KTTKQNLINN…LQDIITSLVI (117 aa)).

Belongs to the DnaA family. In terms of assembly, oligomerizes as a right-handed, spiral filament on DNA at oriC.

It localises to the cytoplasm. Its function is as follows. Plays an essential role in the initiation and regulation of chromosomal replication. ATP-DnaA binds to the origin of replication (oriC) to initiate formation of the DNA replication initiation complex once per cell cycle. Binds the DnaA box (a 9 base pair repeat at the origin) and separates the double-stranded (ds)DNA. Forms a right-handed helical filament on oriC DNA; dsDNA binds to the exterior of the filament while single-stranded (ss)DNA is stabiized in the filament's interior. The ATP-DnaA-oriC complex binds and stabilizes one strand of the AT-rich DNA unwinding element (DUE), permitting loading of DNA polymerase. After initiation quickly degrades to an ADP-DnaA complex that is not apt for DNA replication. Binds acidic phospholipids. The chain is Chromosomal replication initiator protein DnaA from Mycoplasma pneumoniae (strain ATCC 29342 / M129 / Subtype 1) (Mycoplasmoides pneumoniae).